We begin with the raw amino-acid sequence, 391 residues long: Odorant receptor 67d (391 aa).

Residues 1–45 lie on the Cytoplasmic side of the membrane; it reads MLKMAKVEPVERYCKVIRMIRFCVGFCGNDVADPNFRMWWLTYAV. Residues 46–66 traverse the membrane as a helical segment; that stretch reads MAAIAFFFACTGYTIYVGVVI. Topologically, residues 67 to 71 are extracellular; the sequence is NGDLT. A helical membrane pass occupies residues 72-92; it reads IILQALAMVGSAVQGLTKLLV. Over 93 to 140 the chain is Cytoplasmic; sequence TANNASHMREVQNTYEDIYREYGSKGDEYAKCLEKRIRITWTLLIGFM. Residues 141 to 161 form a helical membrane-spanning segment; that stretch reads LVYIILLGLVITFPIFYLLIL. Topologically, residues 162–164 are extracellular; the sequence is HQK. Residues 165-185 traverse the membrane as a helical segment; sequence VLVMQFLIPFLDHTTDGGHLI. Residues 186–191 are Cytoplasmic-facing; the sequence is LTAAHV. Residues 192–212 form a helical membrane-spanning segment; that stretch reads ILITFGGFGNYGGDMYLFLFV. Over 213-268 the chain is Extracellular; that stretch reads THVPLIKDIFCVKLTEFNELVMKRNDFPKVRAMLCDLLVWHQLYTRMLQTTKKIYS. A helical transmembrane segment spans residues 269 to 289; the sequence is IVLFVQLSTTCVGLLCTISCI. Residues 290–297 lie on the Cytoplasmic side of the membrane; the sequence is FMKAWPAA. A helical membrane pass occupies residues 298-318; it reads PLYLLYAAITLYTFCGLGTLV. At 319–391 the chain is on the extracellular side; that stretch reads ENSNEDFLSV…FSMMLMNYLG (73 aa).

Belongs to the insect chemoreceptor superfamily. Heteromeric odorant receptor channel (TC 1.A.69) family. Or67d subfamily. In terms of assembly, interacts with Orco. Complexes exist early in the endomembrane system in olfactory sensory neurons (OSNs), coupling these complexes to the conserved ciliary trafficking pathway. Expressed in antenna.

It localises to the cell membrane. Plays a role in detection and sensitivity to pheromones and signal transduction of the fatty-acid-derived male pheromone 11-cis vaccenyl acetate (cVA). Acts in concert with Snmp and lush to capture cVA molecules on the surface of Or67d expressing olfactory dendrites and facilitate their transfer to the odorant-receptor Orco complex. Necessary to mediate behavioral responses to cVA by regulating both male and female mating behavior. Activation of Or67d neurons by cVA inhibits courtship of other males, whereas in females their activation promotes receptivity to other males. May form a complex with Orco to form odorant-sensing units, providing sensitive and prolonged odorant signaling and calcium permeability. The sequence is that of Odorant receptor 67d (Or67d) from Drosophila melanogaster (Fruit fly).